A 515-amino-acid chain; its full sequence is ATP synthase subunit alpha (515 aa).

171-178 (GDRQTGKT) is an ATP binding site.

This sequence belongs to the ATPase alpha/beta chains family. As to quaternary structure, F-type ATPases have 2 components, CF(1) - the catalytic core - and CF(0) - the membrane proton channel. CF(1) has five subunits: alpha(3), beta(3), gamma(1), delta(1), epsilon(1). CF(0) has three main subunits: a(1), b(2) and c(9-12). The alpha and beta chains form an alternating ring which encloses part of the gamma chain. CF(1) is attached to CF(0) by a central stalk formed by the gamma and epsilon chains, while a peripheral stalk is formed by the delta and b chains.

The protein localises to the cell inner membrane. It catalyses the reaction ATP + H2O + 4 H(+)(in) = ADP + phosphate + 5 H(+)(out). In terms of biological role, produces ATP from ADP in the presence of a proton gradient across the membrane. The alpha chain is a regulatory subunit. The chain is ATP synthase subunit alpha from Xanthomonas oryzae pv. oryzae (strain MAFF 311018).